The sequence spans 402 residues: MVDELGSNSEVGTLKVVILHRPGTELRRLTPRNTDQLLFDGLPWVSRAQEEHDQFAELLRSRGVEVLLLSELLTEALHSGAARMQGVAAAVDSRRLGIPLAQELSAYLRGLDPVRLSHVLTAGMTFNELPADARTDVSLVVRMHHDADFVIEPLPNLLFTRDSSIWIGPRFVIPSLAMRARVREASLTDIIYAHHPRFTGIRRAYESRTAPVEGGDVLLLAPGVVAVGVGERTTPAGAEALARSLFDDDLAHTVLAVPIAQRRAQMHLDTVCTMVDVDKVVMYANVVDELTAFTIERQPDGVTISDAAPFVEAAARAMGIEKLQVIGTGIDPVVAEREQWDDGNNTLALAPGVVVAYERNAQTNARLEAAGIEVLTIGGSELGTGRGGPRCMSCPVARDPLP.

The Amidino-cysteine intermediate role is filled by Cys-391.

Belongs to the arginine deiminase family.

The protein localises to the cytoplasm. It catalyses the reaction L-arginine + H2O = L-citrulline + NH4(+). The protein operates within amino-acid degradation; L-arginine degradation via ADI pathway; carbamoyl phosphate from L-arginine: step 1/2. This chain is Arginine deiminase, found in Mycobacterium marinum (strain ATCC BAA-535 / M).